Here is a 410-residue protein sequence, read N- to C-terminus: MAWADKYRPVDISELIMPSDELNSIIRWADSWRNNEVIKKSLILYGDPGTGKTTTATVIANYLNVPLIEMNASDERNADSMKRVALMSSLYSDLLSERRIPDRLILIDEADNIFESRDPKRGGDYGGITELLNVVKETRNPVIITMNDYYSFRSKRSGREIIDNSLVIEMRPYRRRNDQRYREFINKCLERCHYILKKEGKSLPENDIIRIIKENEPDIRSIINDLEAYAQDSNPGTRNKKIDIYRYVIDTFHSHDYDKLINSFSDADFDPDYYIKWIDQNLKEEYQDPEDLKNAYDILSIADLYSRLSYRANYMLTGISQEIAAGVSLMVKNKNRSTGRYSMPDIIKMYSSRKGINGARTLLEKLAALNHTSSNVIVSYLWFYRIIKRTAEFKRISRILDLSDNEVKQI.

46 to 53 serves as a coordination point for ATP; it reads GDPGTGKT.

The protein belongs to the activator 1 small subunits family. RfcL subfamily. Heteromultimer composed of small subunits (RfcS) and large subunits (RfcL).

Its function is as follows. Part of the RFC clamp loader complex which loads the PCNA sliding clamp onto DNA. The sequence is that of Replication factor C large subunit from Picrophilus torridus (strain ATCC 700027 / DSM 9790 / JCM 10055 / NBRC 100828 / KAW 2/3).